A 166-amino-acid chain; its full sequence is Lipoprotein signal peptidase (166 aa).

Helical transmembrane passes span 9–29 (ASGA…FDQL), 45–65 (ALTS…FGFL), 71–91 (WQRW…CFLL), and 100–120 (FSLS…DRLV). Residues aspartate 126 and aspartate 144 contribute to the active site. A helical transmembrane segment spans residues 135–155 (WHFPAFNLADSAITIGAVLLI).

It belongs to the peptidase A8 family.

The protein resides in the cell inner membrane. The enzyme catalyses Release of signal peptides from bacterial membrane prolipoproteins. Hydrolyzes -Xaa-Yaa-Zaa-|-(S,diacylglyceryl)Cys-, in which Xaa is hydrophobic (preferably Leu), and Yaa (Ala or Ser) and Zaa (Gly or Ala) have small, neutral side chains.. Its pathway is protein modification; lipoprotein biosynthesis (signal peptide cleavage). Its function is as follows. This protein specifically catalyzes the removal of signal peptides from prolipoproteins. This is Lipoprotein signal peptidase from Burkholderia multivorans (strain ATCC 17616 / 249).